Here is a 276-residue protein sequence, read N- to C-terminus: Octanoyltransferase LipM (276 aa).

The BPL/LPL catalytic domain occupies 32–247; it reads GEVAPTLRFY…GFEDALQLTF (216 aa). The active-site Acyl-thioester intermediate is Cys-149.

It belongs to the octanoyltransferase LipM family. As to quaternary structure, monomer.

It carries out the reaction octanoyl-[ACP] + L-lysyl-[protein] = N(6)-octanoyl-L-lysyl-[protein] + holo-[ACP] + H(+). The protein operates within protein modification; protein lipoylation via endogenous pathway; protein N(6)-(lipoyl)lysine from octanoyl-[acyl-carrier-protein]. Catalyzes the transfer of endogenously produced octanoic acid from octanoyl-acyl-carrier-protein onto the lipoyl domain of GcvH, an intermediate carrier during protein lipoylation. This is Octanoyltransferase LipM from Exiguobacterium sibiricum (strain DSM 17290 / CCUG 55495 / CIP 109462 / JCM 13490 / 255-15).